Reading from the N-terminus, the 691-residue chain is Elongation factor G (691 aa).

Residues 8 to 282 form the tr-type G domain; the sequence is ERVRNIGIAA…AVVDYLPAPI (275 aa). GTP contacts are provided by residues 17-24, 81-85, and 135-138; these read AHIDAGKT, DTPGH, and NKMD.

This sequence belongs to the TRAFAC class translation factor GTPase superfamily. Classic translation factor GTPase family. EF-G/EF-2 subfamily.

The protein resides in the cytoplasm. In terms of biological role, catalyzes the GTP-dependent ribosomal translocation step during translation elongation. During this step, the ribosome changes from the pre-translocational (PRE) to the post-translocational (POST) state as the newly formed A-site-bound peptidyl-tRNA and P-site-bound deacylated tRNA move to the P and E sites, respectively. Catalyzes the coordinated movement of the two tRNA molecules, the mRNA and conformational changes in the ribosome. This is Elongation factor G from Synechococcus sp. (strain CC9902).